The following is a 334-amino-acid chain: MTPLDAKRPLQLNAQGQLQHFLSLDGLPRELLTEILDTADSFLEVGGRAVKKVPLLRGKTICNVFFENSTRTRTTFELAAQRLSADVITLNVSTSSASKGETLLDTLRNLEAMAADMFVVRHGDSGAAHFIAEHVCPQVAIINGGDGRHAHPTQGMLDMLTIRRHKGSFENLSVAIVGDILHSRVARSNMLALKTLGCPDIRVIAPKTLLPIGIEQYGVKVYTDMAEGLKDVDVVIMLRLQRERMSGGLLPSEGEFYRLFGLTTARLAGAKPDAIVMHPGPINRGVEIESAVADGNQSVILNQVTYGIAVRMAVLSMAMSGQTAQRQFEQENAQ.

Carbamoyl phosphate-binding residues include Arg71 and Thr72. Residue Lys99 participates in L-aspartate binding. Residues Arg121, His151, and Gln154 each coordinate carbamoyl phosphate. Positions 184 and 239 each coordinate L-aspartate. Positions 280 and 281 each coordinate carbamoyl phosphate.

It belongs to the aspartate/ornithine carbamoyltransferase superfamily. ATCase family. In terms of assembly, heterododecamer (2C3:3R2) of six catalytic PyrB chains organized as two trimers (C3), and six regulatory PyrI chains organized as three dimers (R2).

The catalysed reaction is carbamoyl phosphate + L-aspartate = N-carbamoyl-L-aspartate + phosphate + H(+). It functions in the pathway pyrimidine metabolism; UMP biosynthesis via de novo pathway; (S)-dihydroorotate from bicarbonate: step 2/3. In terms of biological role, catalyzes the condensation of carbamoyl phosphate and aspartate to form carbamoyl aspartate and inorganic phosphate, the committed step in the de novo pyrimidine nucleotide biosynthesis pathway. The sequence is that of Aspartate carbamoyltransferase catalytic subunit from Pseudomonas fluorescens (strain SBW25).